Consider the following 367-residue polypeptide: Peptide chain release factor 2 (367 aa).

N5-methylglutamine is present on glutamine 254.

It belongs to the prokaryotic/mitochondrial release factor family. Methylated by PrmC. Methylation increases the termination efficiency of RF2.

The protein localises to the cytoplasm. Its function is as follows. Peptide chain release factor 2 directs the termination of translation in response to the peptide chain termination codons UGA and UAA. The sequence is that of Peptide chain release factor 2 from Acidovorax ebreus (strain TPSY) (Diaphorobacter sp. (strain TPSY)).